The following is a 248-amino-acid chain: 3-deoxy-manno-octulosonate cytidylyltransferase (248 aa).

Belongs to the KdsB family.

The protein localises to the cytoplasm. The catalysed reaction is 3-deoxy-alpha-D-manno-oct-2-ulosonate + CTP = CMP-3-deoxy-beta-D-manno-octulosonate + diphosphate. It functions in the pathway nucleotide-sugar biosynthesis; CMP-3-deoxy-D-manno-octulosonate biosynthesis; CMP-3-deoxy-D-manno-octulosonate from 3-deoxy-D-manno-octulosonate and CTP: step 1/1. The protein operates within bacterial outer membrane biogenesis; lipopolysaccharide biosynthesis. Activates KDO (a required 8-carbon sugar) for incorporation into bacterial lipopolysaccharide in Gram-negative bacteria. In Leptospira interrogans serogroup Icterohaemorrhagiae serovar copenhageni (strain Fiocruz L1-130), this protein is 3-deoxy-manno-octulosonate cytidylyltransferase.